We begin with the raw amino-acid sequence, 287 residues long: Stomatin-like protein 3 (287 aa).

Serine 3 carries the phosphoserine modification. A helical; Signal-anchor for type III membrane protein transmembrane segment spans residues 25–45 (WILFFLSFLLMLVTFPISVWM). At 46–287 (CLKIIKEYER…GNNKKVTAKA (242 aa)) the chain is on the cytoplasmic side. The residue at position 237 (serine 237) is a Phosphoserine.

It belongs to the band 7/mec-2 family. As to quaternary structure, homodimer. Interacts with PIEZO1 and PIEZO2. As to expression, expressed by all dorsal root ganglion neurons and is selectively expressed in neuronal tissues. Detected in olfactory epithelium.

Its subcellular location is the cell membrane. In terms of biological role, required for the function of many mechanoreceptors. Modulate mechanotransduction channels and acid-sensing ion channels (ASIC) proteins. Potentiates PIEZO1 and PIEZO2 function by increasing their sensitivity to mechanical stimulations. This Mus musculus (Mouse) protein is Stomatin-like protein 3 (Stoml3).